A 377-amino-acid polypeptide reads, in one-letter code: MEASLSNHILNFSVDLYKQLKPSGKDTAGNVFCSPFSIAAALSMALAGARGNTAKQIAAILHTNDDKIHDHFSNFLRKLPSYAPDVALHIANRMYSEQTFHLKAEYTTLLQKSYDSTIKAVDFAGNADRVRLEVNAWVEEVTRSKIRDLLAPGTVDALTSLILVNAIYFKGLWECQFKPSATKPGDFHLTPQTSKTVDMMHQKGDFKMGHCSDLKVTALEIPYKGNKTSMVILLPKDVEGLSVLEEHLTAPKLSALLGGMYVTSDVYLRLPKFKLEQSIGLKDVLMAMGVKDFFTSLADLSGISATGNLCASDVIHKAFVEVNEEGTEAAAANAIRLRYMCLRFPQVINFFVDRPFMFLIHSHDPDVVLFMGSIREL.

N-linked (GlcNAc...) asparagine glycosylation is found at Asn11 and Asn226.

Belongs to the serpin family. In terms of tissue distribution, female salivary gland. Not detected in midgut and other tissues.

It localises to the secreted. In terms of biological role, salivary protein with immunosuppressive properties that can modulate blood feeding of ticks on vertebrate species. Inhibits proliferation of bovine peripheral blood mononuclear cells (PBMCs). Inhibits IFN-gamma (IFNG) production by bovine PBMCs. The polypeptide is Ipis-1 (Ixodes persulcatus (Taiga tick)).